Reading from the N-terminus, the 309-residue chain is NADH-cytochrome b5 reductase 2 (309 aa).

Residues I3–F23 traverse the membrane as a helical segment. The region spanning S48–N160 is the FAD-binding FR-type domain. FAD-binding positions include D140–D170 and K179–L214.

It belongs to the flavoprotein pyridine nucleotide cytochrome reductase family. FAD is required as a cofactor.

Its subcellular location is the membrane. The enzyme catalyses 2 Fe(III)-[cytochrome b5] + NADH = 2 Fe(II)-[cytochrome b5] + NAD(+) + H(+). In terms of biological role, NADH-cytochrome b5 reductases are involved in desaturation and elongation of fatty acids, cholesterol biosynthesis and drug metabolism. This chain is NADH-cytochrome b5 reductase 2 (cyb5r2), found in Danio rerio (Zebrafish).